A 125-amino-acid polypeptide reads, in one-letter code: Large ribosomal subunit protein uL22 (125 aa).

It belongs to the universal ribosomal protein uL22 family. In terms of assembly, part of the 50S ribosomal subunit.

Functionally, this protein binds specifically to 23S rRNA; its binding is stimulated by other ribosomal proteins, e.g. L4, L17, and L20. It is important during the early stages of 50S assembly. It makes multiple contacts with different domains of the 23S rRNA in the assembled 50S subunit and ribosome. Its function is as follows. The globular domain of the protein is located near the polypeptide exit tunnel on the outside of the subunit, while an extended beta-hairpin is found that lines the wall of the exit tunnel in the center of the 70S ribosome. The protein is Large ribosomal subunit protein uL22 of Thermobifida fusca (strain YX).